Reading from the N-terminus, the 196-residue chain is MLKIEGLVLASSSKYRLALLEQIGVVPGEVVSPNIDESLLKGELPRRYCMRMARTKADAVAALRSDKFVLGADTVAYCGKRVLSKTESEDCAVRYLEMLSGRRHRVCTSVCLRSPGGIVHERSVVSVVKFKSMSKGEIEYYISSGQWRGKAGGYGIQGFAGALISWIQGSYSSIAGLPLHETYCLLCGYFDLKHIP.

Catalysis depends on aspartate 73, which acts as the Proton acceptor.

This sequence belongs to the Maf family. Requires a divalent metal cation as cofactor.

It is found in the cytoplasm. It catalyses the reaction a ribonucleoside 5'-triphosphate + H2O = a ribonucleoside 5'-phosphate + diphosphate + H(+). The enzyme catalyses a 2'-deoxyribonucleoside 5'-triphosphate + H2O = a 2'-deoxyribonucleoside 5'-phosphate + diphosphate + H(+). Nucleoside triphosphate pyrophosphatase. May have a dual role in cell division arrest and in preventing the incorporation of modified nucleotides into cellular nucleic acids. This chain is Nucleoside triphosphate pyrophosphatase, found in Anaplasma marginale (strain Florida).